A 161-amino-acid chain; its full sequence is Probable ubiquitin-conjugating enzyme E2 16 (161 aa).

Residues 15–161 (IATNRLQKEL…TRWWFHDDKV (147 aa)) form the UBC core domain. C99 functions as the Glycyl thioester intermediate in the catalytic mechanism.

This sequence belongs to the ubiquitin-conjugating enzyme family.

The enzyme catalyses S-ubiquitinyl-[E1 ubiquitin-activating enzyme]-L-cysteine + [E2 ubiquitin-conjugating enzyme]-L-cysteine = [E1 ubiquitin-activating enzyme]-L-cysteine + S-ubiquitinyl-[E2 ubiquitin-conjugating enzyme]-L-cysteine.. The protein operates within protein modification; protein ubiquitination. Functionally, accepts the ubiquitin from the E1 complex and catalyzes its covalent attachment to other proteins. This Arabidopsis thaliana (Mouse-ear cress) protein is Probable ubiquitin-conjugating enzyme E2 16 (UBC16).